The sequence spans 1487 residues: Collagen alpha-1(II) chain (1487 aa).

Positions 1–25 are cleaved as a signal peptide; it reads MIRLGAPQSLVLLTLLIAAVLRCQG. The propeptide at 26-181 is N-terminal propeptide; it reads QDAQEAGSCL…PGLSAGNFAA (156 aa). One can recognise a VWFC domain in the interval 32–89; sequence GSCLQNGQRYKDKDVWKPSSCRICVCDTGNVLCDDIICEDPDCLNPEIPFGECCPICP. The tract at residues 96–179 is disordered; that stretch reads SGKLGPKGQK…GPPGLSAGNF (84 aa). 2 stretches are compositionally biased toward basic and acidic residues: residues 104–115 and 132–153; these read QKGEPGDIRDII and PRGD…RDGE. Over residues 157–172 the composition is skewed to pro residues; that stretch reads PGNPGPAGPPGPPGPP. Lysine 190 is subject to 5-hydroxylysine. Lysine 190 is a glycosylation site (O-linked (Gal...) hydroxylysine). The disordered stretch occupies residues 191–1237; sequence AGGAQMGVMQ…QREKGPDPMQ (1047 aa). Low complexity predominate over residues 192–203; the sequence is GGAQMGVMQGPM. The triple-helical region stretch occupies residues 201–1214; it reads GPMGPMGPRG…PGPPGPPGPP (1014 aa). Residues 208–217 are compositionally biased toward pro residues; that stretch reads PRGPPGPAGA. Low complexity predominate over residues 218 to 239; that stretch reads PGPQGFQGNPGEPGEPGVSGPM. Over residues 251–265 the composition is skewed to basic and acidic residues; it reads PGDDGEAGKPGKSGE. 5-hydroxylysine occurs at positions 287, 299, and 308. Lysine 287, lysine 299, and lysine 308 each carry an O-linked (Gal...) hydroxylysine glycan. Composition is skewed to low complexity over residues 310 to 320 and 335 to 350; these read ESGSPGENGSP and TGPA…DGQP. Positions 360-369 are enriched in gly residues; sequence GPAGGPGFPG. 2 stretches are compositionally biased toward low complexity: residues 370–382 and 403–431; these read APGA…PTGA and PAGA…AGAP. Lysine 374 is modified (5-hydroxylysine). Residue lysine 374 is glycosylated (O-linked (Gal...) hydroxylysine). Over residues 433 to 442 the composition is skewed to pro residues; the sequence is FPGPRGPPGP. Low complexity predominate over residues 472-485; that stretch reads ETGPAGPQGAPGPA. 5-hydroxylysine occurs at positions 608 and 620. O-linked (Gal...) hydroxylysine glycosylation is found at lysine 608 and lysine 620. Residues 622-631 show a composition bias toward low complexity; sequence LAGAPGLRGL. A 4-hydroxyproline mark is found at proline 659 and proline 668. Position 670 is a 3-hydroxyproline (proline 670). Residues proline 671 and proline 674 each carry the 4-hydroxyproline modification. Low complexity predominate over residues 706-736; the sequence is ERGSPGAQGLQGPRGLPGTPGTDGPKGAAGP. The span at 764-775 shows a compositional bias: basic and acidic residues; the sequence is KGDRGDVGEKGP. Low complexity-rich tracts occupy residues 833–848 and 877–914; these read AGFA…PGAK and PTGV…NGNP. Proline 907 is subject to 3-hydroxyproline. A 4-hydroxyproline mark is found at proline 908, proline 914, and proline 920. Over residues 962-980 the composition is skewed to low complexity; it reads DGPSGLDGPPGPQGLAGQR. Pro residues predominate over residues 1069-1079; sequence APGPPGSPGPA. Over residues 1115-1129 the composition is skewed to basic and acidic residues; that stretch reads RGDKGESGEQGERGL. The residue at position 1144 (proline 1144) is a 3-hydroxyproline. 2 stretches are compositionally biased toward low complexity: residues 1148 to 1157 and 1171 to 1181; these read SGDQGASGPA and PSGKDGSNGIP. Proline 1181 is subject to 4-hydroxyproline. The residue at position 1186 (proline 1186) is a 3-hydroxyproline. Residue proline 1187 is modified to 4-hydroxyproline. The segment covering 1199 to 1216 has biased composition (pro residues); the sequence is VGPPGSPGPPGPPGPPGP. Residue proline 1201 is modified to 3-hydroxyproline. A 4-hydroxyproline mark is found at proline 1202 and proline 1205. At proline 1207 the chain carries 3-hydroxyproline. 4-hydroxyproline occurs at positions 1208 and 1211. Residue proline 1213 is modified to 3-hydroxyproline. 4-hydroxyproline is present on proline 1214. The interval 1215-1241 is nonhelical region (C-terminal); sequence GPGIDMSAFAGLGQREKGPDPMQYMRA. The region spanning 1253–1487 is the Fibrillar collagen NC1 domain; it reads VEVDATLKSL…GVDIGPVCFL (235 aa). Disulfide bonds link cysteine 1283/cysteine 1315, cysteine 1323/cysteine 1485, and cysteine 1393/cysteine 1438. Residues aspartate 1301, asparagine 1303, glutamine 1304, cysteine 1306, and aspartate 1309 each contribute to the Ca(2+) site.

It belongs to the fibrillar collagen family. Homotrimers of alpha 1(II) chains. In terms of processing, contains mostly 4-hydroxyproline. Prolines at the third position of the tripeptide repeating unit (G-X-P) are 4-hydroxylated in some or all of the chains. Contains 3-hydroxyproline at a few sites. This modification occurs on the first proline residue in the sequence motif Gly-Pro-Hyp, where Hyp is 4-hydroxyproline. Post-translationally, lysine residues at the third position of the tripeptide repeating unit (G-X-Y) are 5-hydroxylated in some or all of the chains. In terms of processing, O-glycosylated on hydroxylated lysine residues. The O-linked glycan consists of a Glc-Gal disaccharide.

The protein localises to the secreted. It is found in the extracellular space. The protein resides in the extracellular matrix. Type II collagen is specific for cartilaginous tissues. It is essential for the normal embryonic development of the skeleton, for linear growth and for the ability of cartilage to resist compressive forces. This chain is Collagen alpha-1(II) chain, found in Mus musculus (Mouse).